The following is a 73-amino-acid chain: MMSKLGVLLTVCPLLFPLTALPPDGDQPADRPAERMQDDISSDEHPLFDKRQNCCNGGCSSKWCRDHARCCGR.

A signal peptide spans 1 to 20; the sequence is MMSKLGVLLTVCPLLFPLTA. Residues 20-40 form a disordered region; that stretch reads ALPPDGDQPADRPAERMQDDI. Positions 21-49 are excised as a propeptide; it reads LPPDGDQPADRPAERMQDDISSDEHPLFD. Residues 28 to 40 are compositionally biased toward basic and acidic residues; that stretch reads PADRPAERMQDDI. Gln-52 is modified (pyrrolidone carboxylic acid). Disulfide bonds link Cys-54–Cys-64, Cys-55–Cys-70, and Cys-59–Cys-71. Cys-71 carries the post-translational modification Cysteine amide.

It belongs to the conotoxin M superfamily. Expressed by the venom duct.

It is found in the secreted. Its function is as follows. Mu-conotoxins block voltage-gated sodium channels (Nav). This toxin moderately blocks rNav1.1/SCN1A, rNav1.2/SCN2A, rNav1.3/SCN3A, rNav1.4/SCN4A, and mNav1.6/SCN8A. The polypeptide is Mu-conotoxin SIIIA (Conus striatus (Striated cone)).